A 156-amino-acid chain; its full sequence is UPF0178 protein Jann_2168 (156 aa).

It belongs to the UPF0178 family.

In Jannaschia sp. (strain CCS1), this protein is UPF0178 protein Jann_2168.